The sequence spans 642 residues: Poly(A) polymerase beta (642 aa).

Residues 101 to 103 (FGS), Thr110, 114 to 116 (DID), Asp168, Lys229, Tyr238, and 247 to 248 (GV) each bind ATP. Mg(2+) is bound by residues Asp114, Asp116, and Asp168. Disordered regions lie at residues 530–553 (SENSMTAPSPTGTMKTGPLTGNPQ) and 620–642 (LVNHPSRPSGNTATNIPNPILGV). Over residues 620 to 636 (LVNHPSRPSGNTATNIP) the composition is skewed to polar residues.

The protein belongs to the poly(A) polymerase family. In terms of assembly, interacts with GSG1. It depends on Mg(2+) as a cofactor. Requires Mn(2+) as cofactor. Testis specific.

It is found in the cytoplasm. The protein resides in the nucleus. It catalyses the reaction RNA(n) + ATP = RNA(n)-3'-adenine ribonucleotide + diphosphate. This Mus musculus (Mouse) protein is Poly(A) polymerase beta.